We begin with the raw amino-acid sequence, 429 residues long: Z-DNA-binding protein 1 (429 aa).

Z-binding domains lie at 8-70 and 103-166; these read PGRE…CLGG and PQFS…TIYR. Residues 68–107 are disordered; the sequence is LGGTDPEGEGPAELALSSPAERPQQHAATIPETPGPQFSQ. 2 consecutive short sequence motifs (RIP homotypic interaction motif (RHIM)) follow at residues 195-219 and 253-277; these read NSWI…RQTV and DIHM…LHGV. Disordered stretches follow at residues 277-299 and 339-429; these read VPSE…AAGP and KMSI…GGGI. Over residues 347-358 the composition is skewed to gly residues; that stretch reads AGPGGVAGSGEG. A compositionally biased stretch (basic and acidic residues) spans 407-420; it reads KAAEGSHYVDEASH.

As to quaternary structure, homodimer. Interacts (via RIP homotypic interaction motif) with RIPK3; leading to RIPK3 activation and necroptosis; interaction is enhanced by CASP6. Interacts (via RIP homotypic interaction motif) with RIPK1. Component of the AIM2 PANoptosome complex, a multiprotein complex that drives inflammatory cell death (PANoptosis). In terms of assembly, (Microbial infection) Interacts (via RIP homotypic interaction motif/RHIM) with herpes simplex virus 1/HHV-1 protein RIR1/ICP6 (via RHIM); this interaction may induce heteromeric amyloid assemblies and prevent necroptosis activation. Interacts with human herpes simplex virus 1/HHV-1 protein ICP0. In terms of processing, phosphorylated. As to expression, highly expressed in lymphatic tissues including lymph node, leukocytes, tonsil, bone marrow and spleen. Expressed to a lesser extent in thymus, lung and liver.

It localises to the cytoplasm. It is found in the nucleus. ZBP1-dependent necroptosis is normally inhibited by RIPK1: RIPK1 inhibits the ZBP1-induced activation of RIPK3 via FADD-mediated recruitment of CASP8, which cleaves RIPK1 and limits TNF-induced necroptosis. Functionally, key innate sensor that recognizes and binds Z-RNA structures, which are produced by a number of viruses, such as herpesvirus, orthomyxovirus or flavivirus, and triggers different forms of cell death. ZBP1 acts as an essential mediator of pyroptosis, necroptosis and apoptosis (PANoptosis), an integral part of host defense against pathogens, by activating RIPK3, caspase-8 (CASP8), and the NLRP3 inflammasome. Key activator of necroptosis, a programmed cell death process in response to death-inducing TNF-alpha family members, via its ability to bind Z-RNA: once activated upon Z-RNA-binding, ZBP1 interacts and stimulates RIPK3 kinase, which phosphorylates and activates MLKL, triggering execution of programmed necrosis. In addition to TNF-induced necroptosis, necroptosis can also take place in the nucleus in response to orthomyxoviruses infection: ZBP1 recognizes and binds Z-RNA structures that are produced in infected nuclei by orthomyxoviruses, such as the influenza A virus (IAV), leading to ZBP1 activation, RIPK3 stimulation and subsequent MLKL phosphorylation, triggering disruption of the nuclear envelope and leakage of cellular DNA into the cytosol. ZBP1-dependent cell death in response to IAV infection promotes interleukin-1 alpha (IL1A) induction in an NLRP3-inflammasome-independent manner: IL1A expression is required for the optimal interleukin-1 beta (IL1B) production, and together, these cytokines promote infiltration of inflammatory neutrophils to the lung, leading to the formation of neutrophil extracellular traps. In addition to its direct role in driving necroptosis via its ability to sense Z-RNAs, also involved in PANoptosis triggered in response to bacterial infection: component of the AIM2 PANoptosome complex, a multiprotein complex that triggers PANoptosis. Also acts as the apical sensor of fungal infection responsible for activating PANoptosis. Involved in CASP8-mediated cell death via its interaction with RIPK1 but independently of its ability to sense Z-RNAs. In some cell types, also able to restrict viral replication by promoting cell death-independent responses. In response to Zika virus infection in neurons, promotes a cell death-independent pathway that restricts viral replication: together with RIPK3, promotes a death-independent transcriptional program that modifies the cellular metabolism via up-regulation expression of the enzyme ACOD1/IRG1 and production of the metabolite itaconate. Itaconate inhibits the activity of succinate dehydrogenase, generating a metabolic state in neurons that suppresses replication of viral genomes. Its function is as follows. (Microbial infection) In case of herpes simplex virus 1/HHV-1 infection, forms hetero-amyloid structures with HHV-1 protein RIR1/ICP6 which may inhibit ZBP1-mediated necroptosis, thereby preventing host cell death pathway and allowing viral evasion. The chain is Z-DNA-binding protein 1 from Homo sapiens (Human).